The chain runs to 487 residues: Protein nucleotidyltransferase YdiU (487 aa).

ATP-binding residues include Gly92, Arg95, Lys106, Asp118, Gly119, Arg169, and Arg176. Asp253 acts as the Proton acceptor in catalysis. Mg(2+)-binding residues include Asn254 and Asp263. Asp263 lines the ATP pocket.

The protein belongs to the SELO family. It depends on Mg(2+) as a cofactor. The cofactor is Mn(2+).

It carries out the reaction L-seryl-[protein] + ATP = 3-O-(5'-adenylyl)-L-seryl-[protein] + diphosphate. The enzyme catalyses L-threonyl-[protein] + ATP = 3-O-(5'-adenylyl)-L-threonyl-[protein] + diphosphate. It catalyses the reaction L-tyrosyl-[protein] + ATP = O-(5'-adenylyl)-L-tyrosyl-[protein] + diphosphate. The catalysed reaction is L-histidyl-[protein] + UTP = N(tele)-(5'-uridylyl)-L-histidyl-[protein] + diphosphate. It carries out the reaction L-seryl-[protein] + UTP = O-(5'-uridylyl)-L-seryl-[protein] + diphosphate. The enzyme catalyses L-tyrosyl-[protein] + UTP = O-(5'-uridylyl)-L-tyrosyl-[protein] + diphosphate. In terms of biological role, nucleotidyltransferase involved in the post-translational modification of proteins. It can catalyze the addition of adenosine monophosphate (AMP) or uridine monophosphate (UMP) to a protein, resulting in modifications known as AMPylation and UMPylation. The chain is Protein nucleotidyltransferase YdiU from Bordetella pertussis (strain Tohama I / ATCC BAA-589 / NCTC 13251).